The following is a 684-amino-acid chain: Glycine--tRNA ligase beta subunit (684 aa).

The protein belongs to the class-II aminoacyl-tRNA synthetase family. Tetramer of two alpha and two beta subunits.

The protein localises to the cytoplasm. It carries out the reaction tRNA(Gly) + glycine + ATP = glycyl-tRNA(Gly) + AMP + diphosphate. This chain is Glycine--tRNA ligase beta subunit, found in Pseudomonas fluorescens (strain ATCC BAA-477 / NRRL B-23932 / Pf-5).